The following is a 291-amino-acid chain: Homoserine kinase (291 aa).

80 to 90 lines the ATP pocket; it reads RPSSGLGSSAA.

The protein belongs to the GHMP kinase family. Homoserine kinase subfamily.

It localises to the cytoplasm. It catalyses the reaction L-homoserine + ATP = O-phospho-L-homoserine + ADP + H(+). Its pathway is amino-acid biosynthesis; L-threonine biosynthesis; L-threonine from L-aspartate: step 4/5. Functionally, catalyzes the ATP-dependent phosphorylation of L-homoserine to L-homoserine phosphate. In Haloquadratum walsbyi (strain DSM 16790 / HBSQ001), this protein is Homoserine kinase.